The primary structure comprises 536 residues: Berberine bridge enzyme-like 2 (536 aa).

The N-terminal stretch at 1–20 is a signal peptide; it reads MKIFCLILFLISSFISTSLA. An intrachain disulfide couples cysteine 35 to cysteine 98. N-linked (GlcNAc...) asparagine glycosylation is found at asparagine 38, asparagine 73, asparagine 136, asparagine 266, asparagine 334, and asparagine 352. One can recognise an FAD-binding PCMH-type domain in the interval 76-250; that stretch reads ATPKPAIVIA…LAFKIKLVPV (175 aa). The 6-(S-cysteinyl)-8alpha-(pros-histidyl)-FAD (His-Cys) cross-link spans 113–175; sequence HDYEGVSYIS…KSHGFPAGVC (63 aa).

The protein belongs to the oxygen-dependent FAD-linked oxidoreductase family. It depends on FAD as a cofactor. Post-translationally, the FAD cofactor is bound via a bicovalent 6-S-cysteinyl, 8alpha-N1-histidyl FAD linkage.

The protein localises to the secreted. Its subcellular location is the cell wall. This chain is Berberine bridge enzyme-like 2, found in Arabidopsis thaliana (Mouse-ear cress).